Consider the following 736-residue polypeptide: Oligopeptide transporter 6 (736 aa).

Transmembrane regions (helical) follow at residues 43-63, 66-86, 116-136, 148-168, 210-230, 258-278, 288-308, 357-377, 412-432, 443-463, 489-511, 527-547, 602-622, 645-665, and 678-698; these read MWVL…FFWY, MPLS…GHLM, VLIT…HILS, FLPA…WAGL, FFLI…YLFT, LGIG…GSPL, VAIG…WLNI, FFAV…VHVL, VPLW…MFIS, WWGV…IGVI, PVAN…TFIS, FMAQ…TAWW, WFFL…KMFP, ATAV…HFIF, and VLSG…FLAL.

Belongs to the oligopeptide OPT transporter (TC 2.A.67.1) family. Expressed in flowers and roots, and at a low level in leaves and stems. Detected in the cambial zone of the vascular bundles and in the region of lateral root initiation. Low expression in the vascular network of the petals and high in the stamen filaments and the gynoecium.

It localises to the membrane. Functionally, involved in the translocation of tetra- and pentapeptides across the cellular membrane in an energy-dependent manner. Also involved in transport of glutathione derivatives and metal complexes, and may be involved in stress resistance. The protein is Oligopeptide transporter 6 (OPT6) of Arabidopsis thaliana (Mouse-ear cress).